The following is a 441-amino-acid chain: Protein eva-1 homolog C (441 aa).

A disordered region spans residues 1-23; it reads MLLPGRARQPPTPQPVQHPGLRR. An N-terminal signal peptide occupies residues 1–48; sequence MLLPGRARQPPTPQPVQHPGLRRQVEPPGQLLRLFYCTVLVCSKEISA. Topologically, residues 49–322 are extracellular; the sequence is LTDFSGYLTK…AYIRAHPERA (274 aa). N62 carries N-linked (GlcNAc...) asparagine glycosylation. The SUEL-type lectin 1 domain occupies 67 to 159; sequence ACDGDYLNLQ…KYLLVSFKCQ (93 aa). N165 carries an N-linked (GlcNAc...) asparagine glycan. Residues 168-260 form the SUEL-type lectin 2 domain; the sequence is VCEDQELKLH…KYLTVTYACV (93 aa). Residues 323-343 traverse the membrane as a helical segment; sequence ALLFVSSVCIGLALTLCALVI. The Cytoplasmic portion of the chain corresponds to 344–441; that stretch reads RESCAKDFRD…SLPRNMGQFY (98 aa). The segment at 362 to 390 is disordered; sequence VPGSDKVEEDSEDEEEEEDPSESDFPGEL. Positions 368 to 383 are enriched in acidic residues; sequence VEEDSEDEEEEEDPSE.

This sequence belongs to the EVA1 family. Ubiquitous.

The protein resides in the membrane. In terms of biological role, binds heparin. The protein is Protein eva-1 homolog C (EVA1C) of Homo sapiens (Human).